Consider the following 184-residue polypeptide: ATP synthase subunit b, chloroplastic (184 aa).

A helical membrane pass occupies residues 27-49 (LATNLINLSVVFGVLIFFGKGVL).

Belongs to the ATPase B chain family. F-type ATPases have 2 components, F(1) - the catalytic core - and F(0) - the membrane proton channel. F(1) has five subunits: alpha(3), beta(3), gamma(1), delta(1), epsilon(1). F(0) has four main subunits: a(1), b(1), b'(1) and c(10-14). The alpha and beta chains form an alternating ring which encloses part of the gamma chain. F(1) is attached to F(0) by a central stalk formed by the gamma and epsilon chains, while a peripheral stalk is formed by the delta, b and b' chains.

The protein localises to the plastid. The protein resides in the chloroplast thylakoid membrane. In terms of biological role, f(1)F(0) ATP synthase produces ATP from ADP in the presence of a proton or sodium gradient. F-type ATPases consist of two structural domains, F(1) containing the extramembraneous catalytic core and F(0) containing the membrane proton channel, linked together by a central stalk and a peripheral stalk. During catalysis, ATP synthesis in the catalytic domain of F(1) is coupled via a rotary mechanism of the central stalk subunits to proton translocation. Its function is as follows. Component of the F(0) channel, it forms part of the peripheral stalk, linking F(1) to F(0). The protein is ATP synthase subunit b, chloroplastic of Aethionema cordifolium (Lebanon stonecress).